A 292-amino-acid chain; its full sequence is Probable 2-(5''-triphosphoribosyl)-3'-dephosphocoenzyme-A synthase (292 aa).

This sequence belongs to the CitG/MdcB family.

It catalyses the reaction 3'-dephospho-CoA + ATP = 2'-(5''-triphospho-alpha-D-ribosyl)-3'-dephospho-CoA + adenine. This Shigella flexneri protein is Probable 2-(5''-triphosphoribosyl)-3'-dephosphocoenzyme-A synthase.